Here is a 248-residue protein sequence, read N- to C-terminus: MSFVVIIPARYASTRLPGKPLVDINGKPMIVHVLERARESGAERIIVATDHDDVARAVEAAGGEVCMTRADHQSGTERLAEVVEKCAFSDDTVIVNVQGDEPMIPATIIRQVADNLAQRQVGMATLAVPIHNAEEAFNPNAVKVVLDAEGYALYFSRATIPWDRDRFAEGLETVGDNFLRHLGIYGYRAGFIRRYVNWQASPLEHIEMLEQLRVLWYGEKIHVAVAQEVPGTGVDTPEDLERVRAEMR.

Belongs to the KdsB family.

It localises to the cytoplasm. It catalyses the reaction 3-deoxy-alpha-D-manno-oct-2-ulosonate + CTP = CMP-3-deoxy-beta-D-manno-octulosonate + diphosphate. It functions in the pathway nucleotide-sugar biosynthesis; CMP-3-deoxy-D-manno-octulosonate biosynthesis; CMP-3-deoxy-D-manno-octulosonate from 3-deoxy-D-manno-octulosonate and CTP: step 1/1. Its pathway is bacterial outer membrane biogenesis; lipopolysaccharide biosynthesis. Its function is as follows. Activates KDO (a required 8-carbon sugar) for incorporation into bacterial lipopolysaccharide in Gram-negative bacteria. This is 3-deoxy-manno-octulosonate cytidylyltransferase from Shigella flexneri.